Consider the following 469-residue polypeptide: Cytochrome P450 85A1 (469 aa).

Residues 1-21 (MVLVAIGVVVAAAVVVSSLLL) traverse the membrane as a helical segment. Cys419 serves as a coordination point for heme.

This sequence belongs to the cytochrome P450 family. The cofactor is heme. Expressed at low levels in all the tissues, but preferentially in the leaf sheath.

It localises to the membrane. It catalyses the reaction 6-deoxoteasterone + reduced [NADPH--hemoprotein reductase] + O2 = 6alpha-hydroxyteasterone + oxidized [NADPH--hemoprotein reductase] + H2O + H(+). The catalysed reaction is 6alpha-hydroxytyphasterol + reduced [NADPH--hemoprotein reductase] + O2 = teasterone + oxidized [NADPH--hemoprotein reductase] + 2 H2O + H(+). The enzyme catalyses 3-dehydro-6-deoxoteasterone + reduced [NADPH--hemoprotein reductase] + O2 = 3-dehydro-6alpha-hydroxyteasterone + oxidized [NADPH--hemoprotein reductase] + H2O + H(+). It carries out the reaction 3-dehydro-6alpha-hydroxyteasterone + reduced [NADPH--hemoprotein reductase] + O2 = 3-dehydroteasterone + oxidized [NADPH--hemoprotein reductase] + 2 H2O + H(+). It catalyses the reaction 6-deoxotyphasterol + reduced [NADPH--hemoprotein reductase] + O2 = 6alpha-hydroxytyphasterol + oxidized [NADPH--hemoprotein reductase] + H2O + H(+). The catalysed reaction is 6alpha-hydroxytyphasterol + reduced [NADPH--hemoprotein reductase] + O2 = typhasterol + oxidized [NADPH--hemoprotein reductase] + 2 H2O + H(+). The enzyme catalyses 3-dehydro-6-deoxoteasterone + 2 reduced [NADPH--hemoprotein reductase] + 2 O2 = 3-dehydroteasterone + 2 oxidized [NADPH--hemoprotein reductase] + 3 H2O + 2 H(+). It carries out the reaction 6-deoxoteasterone + 2 reduced [NADPH--hemoprotein reductase] + 2 O2 = teasterone + 2 oxidized [NADPH--hemoprotein reductase] + 3 H2O + 2 H(+). It catalyses the reaction 6-deoxotyphasterol + 2 reduced [NADPH--hemoprotein reductase] + 2 O2 = typhasterol + 2 oxidized [NADPH--hemoprotein reductase] + 3 H2O + 2 H(+). It participates in plant hormone biosynthesis; brassinosteroid biosynthesis. In terms of biological role, catalyzes the C6-oxidation step in brassinosteroids biosynthesis. May convert 6-deoxoteasterone (6-deoxoTE) to teasterone (TE), 3-dehydro-6-deoxoteasterone (6-deoxo3DT, 6-deoxo3DHT) to 3-dehydroteasterone (3DT, 3-DHT), and 6-deoxotyphasterol (6-deoxoTY) to typhasterol (TY). Involved in the organization and elongation of the leaf and stem cells. Not able to convert 6-deoxocastasterone (6-deoxoCS) and castasterone (CS) to brassinolide (BL). The polypeptide is Cytochrome P450 85A1 (Oryza sativa subsp. japonica (Rice)).